A 484-amino-acid polypeptide reads, in one-letter code: tRNA sulfurtransferase (484 aa).

One can recognise a THUMP domain in the interval 63–167 (EAFAERLACI…NDNLYLIDKR (105 aa)). Residues 185–186 (LI), Lys-267, Gly-289, and Gln-298 each bind ATP. A disulfide bridge connects residues Cys-346 and Cys-458. Residues 406 to 484 (ISAGEIIIDV…GYNNVKVYRP (79 aa)) form the Rhodanese domain. Cys-458 serves as the catalytic Cysteine persulfide intermediate.

This sequence belongs to the ThiI family.

The protein localises to the cytoplasm. The catalysed reaction is [ThiI sulfur-carrier protein]-S-sulfanyl-L-cysteine + a uridine in tRNA + 2 reduced [2Fe-2S]-[ferredoxin] + ATP + H(+) = [ThiI sulfur-carrier protein]-L-cysteine + a 4-thiouridine in tRNA + 2 oxidized [2Fe-2S]-[ferredoxin] + AMP + diphosphate. It catalyses the reaction [ThiS sulfur-carrier protein]-C-terminal Gly-Gly-AMP + S-sulfanyl-L-cysteinyl-[cysteine desulfurase] + AH2 = [ThiS sulfur-carrier protein]-C-terminal-Gly-aminoethanethioate + L-cysteinyl-[cysteine desulfurase] + A + AMP + 2 H(+). Its pathway is cofactor biosynthesis; thiamine diphosphate biosynthesis. Functionally, catalyzes the ATP-dependent transfer of a sulfur to tRNA to produce 4-thiouridine in position 8 of tRNAs, which functions as a near-UV photosensor. Also catalyzes the transfer of sulfur to the sulfur carrier protein ThiS, forming ThiS-thiocarboxylate. This is a step in the synthesis of thiazole, in the thiamine biosynthesis pathway. The sulfur is donated as persulfide by IscS. In Shewanella pealeana (strain ATCC 700345 / ANG-SQ1), this protein is tRNA sulfurtransferase.